The following is a 372-amino-acid chain: Germination protease (372 aa).

The propeptide occupies 1-15 (MNRSIDLSMYSVRTD).

It belongs to the peptidase A25 family. In terms of assembly, homotetramer. Autoproteolytically processed. The inactive tetrameric zymogen termed p46 autoprocesses to a smaller form termed p41, which is active only during spore germination.

It catalyses the reaction Endopeptidase action with P4 Glu or Asp, P1 preferably Glu &gt; Asp, P1' hydrophobic and P2' Ala.. Its function is as follows. Initiates the rapid degradation of small, acid-soluble proteins during spore germination. The chain is Germination protease from Geobacillus sp. (strain WCH70).